A 113-amino-acid polypeptide reads, in one-letter code: Hydrogenase maturation factor HypA (113 aa).

Residue His2 coordinates Ni(2+). Cys73, Cys76, Cys89, and Cys92 together coordinate Zn(2+).

This sequence belongs to the HypA/HybF family.

Functionally, involved in the maturation of [NiFe] hydrogenases. Required for nickel insertion into the metal center of the hydrogenase. This chain is Hydrogenase maturation factor HypA, found in Azotobacter vinelandii.